The primary structure comprises 364 residues: Very-long-chain (3R)-3-hydroxyacyl-CoA dehydratase 3 (364 aa).

Residues 1–151 (MAMENQVLTP…ETLTNLRKGY (151 aa)) are Cytoplasmic-facing. In terms of domain architecture, CS spans 7-96 (VLTPHVYWAQ…KVSQWWERLT (90 aa)). Residue threonine 9 is modified to Phosphothreonine. Residues 113–138 (LDESDAEMELRAKEEERLNKLRLESE) adopt a coiled-coil conformation. A phosphoserine mark is found at serine 116 and serine 137. Residues 152 to 172 (LFMYNLVQFLGFSWIFVNLTV) traverse the membrane as a helical segment. The Lumenal segment spans residues 173–191 (RFCILGKESFYDTFHTVAD). Residues 192–212 (MMYFCQMLAVVETINAAIGVT) traverse the membrane as a helical segment. The Cytoplasmic segment spans residues 213–214 (TS). Residues 215 to 235 (PVLPSLIQLLGRNFILFIIFG) form a helical membrane-spanning segment. At 236 to 244 (TMEEMQNKA) the chain is on the lumenal side. The chain crosses the membrane as a helical span at residues 245 to 265 (VVFFVFYLWSAIEIFRYSFYM). Topologically, residues 266-282 (LTCIDMDWEVLTWLRYT) are cytoplasmic. Residues 283–303 (LWIPLYPLGCLAEAVSVVQSI) form a helical membrane-spanning segment. Residues tyrosine 288 and glutamate 295 contribute to the active site. Residues 304–324 (PIFNETGRFSFTLPYPVKIKV) lie on the Lumenal side of the membrane. Residues 325-345 (RFSFFLQIYLIMIFLGLYINF) traverse the membrane as a helical segment. Residues 346–364 (RHLYKQRRRRYGQKKKKIH) lie on the Cytoplasmic side of the membrane.

Belongs to the very long-chain fatty acids dehydratase HACD family. As to quaternary structure, may interact with enzymes of the ELO family (including ELOVL1); with those enzymes that mediate condensation, the first of the four steps of the reaction cycle responsible for fatty acids elongation, may be part of a larger fatty acids elongase complex. Interacts with RAC1.

Its subcellular location is the endoplasmic reticulum membrane. The enzyme catalyses a very-long-chain (3R)-3-hydroxyacyl-CoA = a very-long-chain (2E)-enoyl-CoA + H2O. The catalysed reaction is (3R)-hydroxyhexadecanoyl-CoA = (2E)-hexadecenoyl-CoA + H2O. The protein operates within lipid metabolism; fatty acid biosynthesis. In terms of biological role, catalyzes the third of the four reactions of the long-chain fatty acids elongation cycle. This endoplasmic reticulum-bound enzymatic process, allows the addition of two carbons to the chain of long- and very long-chain fatty acids/VLCFAs per cycle. This enzyme catalyzes the dehydration of the 3-hydroxyacyl-CoA intermediate into trans-2,3-enoyl-CoA, within each cycle of fatty acid elongation. Thereby, it participates in the production of VLCFAs of different chain lengths that are involved in multiple biological processes as precursors of membrane lipids and lipid mediators. Involved in Rac1-signaling pathways leading to the modulation of gene expression. The chain is Very-long-chain (3R)-3-hydroxyacyl-CoA dehydratase 3 from Pongo abelii (Sumatran orangutan).